We begin with the raw amino-acid sequence, 592 residues long: Aspartate--tRNA(Asp/Asn) ligase (592 aa).

Residue Glu-175 coordinates L-aspartate. The segment at 199-202 (QLFK) is aspartate. An L-aspartate-binding site is contributed by Arg-221. ATP contacts are provided by residues 221–223 (RDE) and Gln-230. His-447 is a binding site for L-aspartate. ATP is bound at residue Glu-481. Residue Arg-488 coordinates L-aspartate. Position 533–536 (533–536 (GIDR)) interacts with ATP.

Belongs to the class-II aminoacyl-tRNA synthetase family. Type 1 subfamily. In terms of assembly, homodimer.

The protein localises to the cytoplasm. It catalyses the reaction tRNA(Asx) + L-aspartate + ATP = L-aspartyl-tRNA(Asx) + AMP + diphosphate. Its function is as follows. Aspartyl-tRNA synthetase with relaxed tRNA specificity since it is able to aspartylate not only its cognate tRNA(Asp) but also tRNA(Asn). Reaction proceeds in two steps: L-aspartate is first activated by ATP to form Asp-AMP and then transferred to the acceptor end of tRNA(Asp/Asn). The chain is Aspartate--tRNA(Asp/Asn) ligase from Dictyoglomus turgidum (strain DSM 6724 / Z-1310).